Consider the following 466-residue polypeptide: Sushi repeat-containing protein SRPX2 (466 aa).

An N-terminal signal peptide occupies residues 1 to 24; sequence MKTGSLTQRGALLLLLLLAPAVTP. 3 Sushi domains span residues 70–120, 121–179, and 263–322; these read ATCY…YCRQ, MRCH…VCVD, and RRCP…VCTP. 4 disulfides stabilise this stretch: Cys-72–Cys-106, Cys-92–Cys-118, Cys-123–Cys-164, and Cys-150–Cys-177. The region spanning 178–262 is the HYR domain; sequence VDIDPPKIRC…SCKFIVKVQV (85 aa). 2 disulfide bridges follow: Cys-265-Cys-307 and Cys-293-Cys-320.

Forms homooligomers. Interacts with PLAUR (via the UPAR/Ly6 domains), ADAMTS4 and CTSB. Interacts with HGF; the interaction increases the mitogenic activity of HGF. Contains chondroitin sulfate chains.

It is found in the secreted. It localises to the cytoplasm. The protein resides in the cell surface. The protein localises to the synapse. Its function is as follows. Acts as a ligand for the urokinase plasminogen activator surface receptor. Plays a role in angiogenesis by inducing endothelial cell migration and the formation of vascular network (cords). Involved in cellular migration and adhesion. Increases the phosphorylation levels of FAK. Interacts with and increases the mitogenic activity of HGF. Promotes synapse formation. The sequence is that of Sushi repeat-containing protein SRPX2 from Rattus norvegicus (Rat).